Reading from the N-terminus, the 244-residue chain is uncharacterized protein (244 aa).

In terms of domain architecture, HTH gntR-type spans 12–80; it reads VALWRQIADR…QGRGTMIERK (69 aa). Residues 40–59 constitute a DNA-binding region (H-T-H motif); sequence ETALAAEFGVNRHTVRSALA.

This is an uncharacterized protein from Rhizobium meliloti (strain 1021) (Ensifer meliloti).